Here is a 90-residue protein sequence, read N- to C-terminus: Co-chaperonin GroES (90 aa).

The protein belongs to the GroES chaperonin family. As to quaternary structure, heptamer of 7 subunits arranged in a ring. Interacts with the chaperonin GroEL.

It is found in the cytoplasm. Its function is as follows. Together with the chaperonin GroEL, plays an essential role in assisting protein folding. The GroEL-GroES system forms a nano-cage that allows encapsulation of the non-native substrate proteins and provides a physical environment optimized to promote and accelerate protein folding. GroES binds to the apical surface of the GroEL ring, thereby capping the opening of the GroEL channel. This is Co-chaperonin GroES from Bacteroides thetaiotaomicron (strain ATCC 29148 / DSM 2079 / JCM 5827 / CCUG 10774 / NCTC 10582 / VPI-5482 / E50).